The chain runs to 151 residues: Probable cyclic pyranopterin monophosphate synthase (151 aa).

Substrate contacts are provided by residues 66–68 (MCH) and 102–103 (ME). Asp117 is an active-site residue.

The protein belongs to the MoaC family. In terms of assembly, homohexamer; trimer of dimers.

It carries out the reaction (8S)-3',8-cyclo-7,8-dihydroguanosine 5'-triphosphate = cyclic pyranopterin phosphate + diphosphate. The protein operates within cofactor biosynthesis; molybdopterin biosynthesis. In terms of biological role, catalyzes the conversion of (8S)-3',8-cyclo-7,8-dihydroguanosine 5'-triphosphate to cyclic pyranopterin monophosphate (cPMP). This is Probable cyclic pyranopterin monophosphate synthase from Sulfurisphaera tokodaii (strain DSM 16993 / JCM 10545 / NBRC 100140 / 7) (Sulfolobus tokodaii).